The chain runs to 315 residues: Ferrochelatase (315 aa).

2 residues coordinate Fe cation: H193 and E273.

Belongs to the ferrochelatase family.

It is found in the cytoplasm. The enzyme catalyses heme b + 2 H(+) = protoporphyrin IX + Fe(2+). Its pathway is porphyrin-containing compound metabolism; protoheme biosynthesis; protoheme from protoporphyrin-IX: step 1/1. Its function is as follows. Catalyzes the ferrous insertion into protoporphyrin IX. The chain is Ferrochelatase from Wolbachia sp. subsp. Drosophila simulans (strain wRi).